The following is a 238-amino-acid chain: Ribonuclease 3 (238 aa).

The region spanning 10–139 is the RNase III domain; it reads FKQFQEQTGI…FIGALYLDQG (130 aa). Glu52 serves as a coordination point for Mg(2+). Asp56 is an active-site residue. Residues Asp125 and Glu128 each coordinate Mg(2+). The active site involves Glu128. Residues 165 to 234 form the DRBM domain; sequence DYKSQLQEFV…AQMALAKLKQ (70 aa).

Belongs to the ribonuclease III family. As to quaternary structure, homodimer. The cofactor is Mg(2+).

It localises to the cytoplasm. It carries out the reaction Endonucleolytic cleavage to 5'-phosphomonoester.. Its function is as follows. Digests double-stranded RNA. Involved in the processing of primary rRNA transcript to yield the immediate precursors to the large and small rRNAs (23S and 16S). Processes some mRNAs, and tRNAs when they are encoded in the rRNA operon. Processes pre-crRNA and tracrRNA of type II CRISPR loci if present in the organism. The sequence is that of Ribonuclease 3 from Anoxybacillus flavithermus (strain DSM 21510 / WK1).